Here is a 451-residue protein sequence, read N- to C-terminus: Exodeoxyribonuclease 7 large subunit (451 aa).

It belongs to the XseA family. As to quaternary structure, heterooligomer composed of large and small subunits.

It localises to the cytoplasm. It catalyses the reaction Exonucleolytic cleavage in either 5'- to 3'- or 3'- to 5'-direction to yield nucleoside 5'-phosphates.. Bidirectionally degrades single-stranded DNA into large acid-insoluble oligonucleotides, which are then degraded further into small acid-soluble oligonucleotides. The polypeptide is Exodeoxyribonuclease 7 large subunit (Neisseria meningitidis serogroup B (strain ATCC BAA-335 / MC58)).